A 196-amino-acid polypeptide reads, in one-letter code: MVALSVVELLKEKIRQEGRVISDDVLKVDSFLNHQIDPVLMLKVGEEFARRFAGSAITKVLTVEASGIAVALMTGLSLKVPVVFAKKKQPSTMDGETYCGRVRSFTKEEVIDIVVAGSYLGPEDRVLIIDDFLASGEAARGLLKIITQAGATLVGVGTVIEKVFQTGGEALRDQGIRVESLVQIGSLAGGQIEFLN.

Positions 26 and 33 each coordinate xanthine. 134–138 (ASGEA) provides a ligand contact to 5-phospho-alpha-D-ribose 1-diphosphate. K162 contributes to the xanthine binding site.

It belongs to the purine/pyrimidine phosphoribosyltransferase family. Xpt subfamily. Homodimer.

Its subcellular location is the cytoplasm. It carries out the reaction XMP + diphosphate = xanthine + 5-phospho-alpha-D-ribose 1-diphosphate. It participates in purine metabolism; XMP biosynthesis via salvage pathway; XMP from xanthine: step 1/1. Converts the preformed base xanthine, a product of nucleic acid breakdown, to xanthosine 5'-monophosphate (XMP), so it can be reused for RNA or DNA synthesis. This Moorella thermoacetica (strain ATCC 39073 / JCM 9320) protein is Xanthine phosphoribosyltransferase.